A 654-amino-acid chain; its full sequence is Endoplasmic reticulum chaperone BiP (654 aa).

An N-terminal signal peptide occupies residues 1–18 (MKLSLVAAVLLLLCAARA). Residues 1 to 80 (MKLSLVAAVL…EGERLIGDAA (80 aa)) are required for interaction with ELAPOR1. 36 to 39 (GTTY) provides a ligand contact to ATP. Ser86 is modified (phosphoserine). Lys96 contributes to the ATP binding site. Lys125 carries the post-translational modification N6-acetyllysine. The tract at residues 125–280 (KPYIQVDIGG…KKKTGKDVRK (156 aa)) is nucleotide-binding (NBD). A 3'-nitrotyrosine modification is found at Tyr160. Lys213 bears the N6-acetyllysine mark. 227 to 229 (GGT) lines the ATP pocket. Lys271 carries the N6-acetyllysine modification. 293–300 (EKAKRALS) is an ATP binding site. Lys326 is modified (N6-acetyllysine). A Glycyl lysine isopeptide (Lys-Gly) (interchain with G-Cter in SUMO2) cross-link involves residue Lys352. At Lys353 the chain carries N6-acetyllysine; alternate. Lys353 is covalently cross-linked (Glycyl lysine isopeptide (Lys-Gly) (interchain with G-Cter in SUMO1); alternate). 364–367 (GSTR) contacts ATP. Residues 409-419 (QDTGDLVLLDV) are interdomain linker. The tract at residues 420–500 (CPLTLGIETV…PRGVPQIEVT (81 aa)) is substrate-binding (SBD). An N6-succinyllysine modification is found at Lys447. At Arg492 the chain carries Omega-N-methylarginine. Thr518 is modified (O-AMP-threonine; alternate). Thr518 bears the Phosphothreonine; alternate mark. Lys585 bears the N6,N6,N6-trimethyllysine; by METTL21A; in vitro mark. Lys585 carries the post-translational modification N6,N6-dimethyllysine; alternate. Lys585 carries the post-translational modification N6-methyllysine; alternate. Lys591 is subject to N6-methyllysine. The disordered stretch occupies residues 632-654 (SKLYGSAGPPPTGEEDTSERDEL). A phosphothreonine mark is found at Thr643 and Thr648. A compositionally biased stretch (acidic residues) spans 644 to 654 (GEEDTSERDEL). Residue Ser649 is modified to Phosphoserine. Residues 651-654 (RDEL) carry the Prevents secretion from ER motif.

It belongs to the heat shock protein 70 family. Monomer and homooligomer; homooligomerization via the interdomain linker inactivates the chaperone activity and acts as a storage of HSPA5/BiP molecules. Interacts with DNAJC1 (via J domain). Component of an EIF2 complex at least composed of CELF1/CUGBP1, CALR, CALR3, EIF2S1, EIF2S2, HSP90B1 and HSPA5. Part of a large chaperone multiprotein complex comprising DNAJB11, HSP90B1, HSPA5, HYOU, PDIA2, PDIA4, PDIA6, PPIB, SDF2L1, UGGT1 and very small amounts of ERP29, but not, or at very low levels, CALR nor CANX. Interacts with TMEM132A and TRIM21. May form a complex with ERLEC1, OS9, SEL1L and SYVN1. Interacts with DNAJC10. Interacts with DNAJB9/ERdj4; leading to recruit HSPA5/BiP to ERN1/IRE1. Interacts with ERN1/IRE1 (via luminal domain); the interaction takes place following interaction with DNAJB9/ERdj4 and leads to inactivate ERN1/IRE1, the interaction also competitively inhibits ERN1 interaction with MANF. Interacts directly with MANF (via SAP domain); the interaction inhibits ATP binding to HSPA5/BiP and subsequent nucleotide exchange. Interacts with EIF2AK3/PERK (via luminal domain); interaction leads to inactivate EIF2AK3/PERK. Interacts with MX1. Interacts with METTL23. Interacts with CEMIP; the interaction induces calcium leakage from the endoplasmic reticulum and cell migration. Interacts with PCSK4 form; the interaction takes place in the endoplasmic reticulum. Interacts with CIPC. Interacts with CCDC88B (via C-terminus); the interaction opposes ERN1-mediated JNK activation, protecting against apoptosis. Interacts with INPP5K; necessary for INPP5K localization at the endoplasmic reticulum. Interacts with MANF; the interaction is direct. Interacts with LOXL2; leading to activate the ERN1/IRE1-XBP1 pathway of the unfolded protein response. Interacts with CLU under stressed condition; interaction increases CLU protein stability; facilitates its retrotranslocation and redistribution to the mitochondria; cooperatively suppress stress-induced apoptosis by stabilizing mitochondrial membrane integrity. Interacts with CCDC47. Interacts with CLN3. Interacts with ELAPOR1; may regulate the function of HSPA5 in apoptosis and cell proliferation. Interacts with CASP7. Interacts with ILDR2; the interaction stabilizes ILDR2 expression. Interacts with ADAM7. In unstressed cells, AMPylation at Thr-518 by FICD inactivates the chaperome activity: AMPylated form is locked in a relatively inert state and only weakly stimulated by J domain-containing proteins. In response to endoplasmic reticulum stress, de-AMPylation by the same protein, FICD, restores the chaperone activity.

The protein resides in the endoplasmic reticulum lumen. Its subcellular location is the melanosome. The protein localises to the cytoplasm. It is found in the cell surface. The enzyme catalyses ATP + H2O = ADP + phosphate + H(+). The chaperone activity is regulated by ATP-induced allosteric coupling of the nucleotide-binding (NBD) and substrate-binding (SBD) domains. In the ADP-bound and nucleotide-free (apo) states, the two domains have little interaction. In contrast, in the ATP-bound state the two domains are tightly coupled, which results in drastically accelerated kinetics in both binding and release of polypeptide substrates. J domain-containing co-chaperones (DNAJB9/ERdj4 or DNAJC10/ERdj5) stimulate the ATPase activity and are required for efficient substrate recognition by HSPA5/BiP. Homooligomerization inactivates participating HSPA5/BiP protomers and probably act as reservoirs to store HSPA5/BiP molecules when they are not needed by the cell. Its function is as follows. Endoplasmic reticulum chaperone that plays a key role in protein folding and quality control in the endoplasmic reticulum lumen. Involved in the correct folding of proteins and degradation of misfolded proteins via its interaction with DNAJC10/ERdj5, probably to facilitate the release of DNAJC10/ERdj5 from its substrate. Acts as a key repressor of the EIF2AK3/PERK and ERN1/IRE1-mediated unfolded protein response (UPR). In the unstressed endoplasmic reticulum, recruited by DNAJB9/ERdj4 to the luminal region of ERN1/IRE1, leading to disrupt the dimerization of ERN1/IRE1, thereby inactivating ERN1/IRE1. Also binds and inactivates EIF2AK3/PERK in unstressed cells. Accumulation of misfolded protein in the endoplasmic reticulum causes release of HSPA5/BiP from ERN1/IRE1 and EIF2AK3/PERK, allowing their homodimerization and subsequent activation. Plays an auxiliary role in post-translational transport of small presecretory proteins across endoplasmic reticulum (ER). May function as an allosteric modulator for SEC61 channel-forming translocon complex, likely cooperating with SEC62 to enable the productive insertion of these precursors into SEC61 channel. Appears to specifically regulate translocation of precursors having inhibitory residues in their mature region that weaken channel gating. May also play a role in apoptosis and cell proliferation. This chain is Endoplasmic reticulum chaperone BiP, found in Ictidomys tridecemlineatus (Thirteen-lined ground squirrel).